Consider the following 416-residue polypeptide: CinA-like protein (416 aa).

Belongs to the CinA family.

This is CinA-like protein from Trichormus variabilis (strain ATCC 29413 / PCC 7937) (Anabaena variabilis).